The following is a 397-amino-acid chain: Urea transporter 2 (397 aa).

A run of 5 helical transmembrane segments spans residues 68–85 (VMFV…IGLF), 92–109 (AIAG…ALIL), 115–135 (AIAS…IAVF), 143–163 (WWLL…SSAL), and 172–192 (LPVF…ATGH). N-linked (GlcNAc...) asparagine glycosylation is present at N210. Transmembrane regions (helical) follow at residues 239-257 (WTGG…LICL), 264-280 (TMGM…FDSI), 287-303 (FNST…FYVI), 309-329 (LLAV…TNVL), and 331-351 (VFGL…FLLL).

Belongs to the urea transporter family. In terms of tissue distribution, kidney.

It localises to the apical cell membrane. It is found in the basolateral cell membrane. The catalysed reaction is urea(in) = urea(out). Its activity is regulated as follows. Inhibited by urea analogs and phloretin. Functionally, mediates the transport of urea driven by a concentration gradient across the cell membrane of the renal inner medullary collecting duct which is critical to the urinary concentrating mechanism. The chain is Urea transporter 2 (SLC14A2) from Oryctolagus cuniculus (Rabbit).